The following is a 199-amino-acid chain: Probable GTP-binding protein EngB (199 aa).

The region spanning 22–196 is the EngB-type G domain; sequence NFSEVAFLGR…EDVIINQTLG (175 aa). GTP-binding positions include 30–37, 57–61, 82–85, 152–155, and 175–177; these read GRSNVGKS, GKTQL, DLPG, TKCD, and VSN. The Mg(2+) site is built by Ser37 and Thr59.

Belongs to the TRAFAC class TrmE-Era-EngA-EngB-Septin-like GTPase superfamily. EngB GTPase family. Mg(2+) is required as a cofactor.

Necessary for normal cell division and for the maintenance of normal septation. The chain is Probable GTP-binding protein EngB from Campylobacter jejuni subsp. doylei (strain ATCC BAA-1458 / RM4099 / 269.97).